Here is a 456-residue protein sequence, read N- to C-terminus: Ribonuclease inhibitor (456 aa).

N-acetylmethionine is present on methionine 1. LRR repeat units lie at residues 15 to 43 (WTEL…CKDI), 44 to 71 (GSAL…VHLV), 72 to 100 (LQGL…CGVL), 101 to 128 (PSTL…LRLL), 129 to 157 (CEGL…CEPL), 158 to 185 (ASVL…ARVL), 186 to 214 (GQGL…CKDL), 215 to 242 (CGIV…IAEL), 243 to 271 (CPGL…CRDL), 272 to 299 (CRVL…ARLL), 300 to 328 (CESL…CQHV), 329 to 356 (SLML…IQEL), 357 to 385 (CQAL…CSSL), 386 to 413 (ASLL…VLQL), and 414 to 442 (LGSL…EDRL). A Phosphoserine modification is found at serine 86.

In terms of assembly, forms high-affinity heterodimers with RNASE1, ANG and RNASE2.

The protein localises to the cytoplasm. It is found in the nucleus. Ribonuclease inhibitor which inhibits RNASE1, RNASE2 and angiogenin (ANG). May play a role in redox homeostasis. Required to inhibit the cytotoxic tRNA ribonuclease activity of ANG in the cytoplasm in absence of stress. Relocates to the nucleus in response to stress, relieving inhibition of ANG in the cytoplasm, and inhibiting the angiogenic activity of ANG in the nucleus. This Sus scrofa (Pig) protein is Ribonuclease inhibitor (RNH1).